Consider the following 195-residue polypeptide: Large ribosomal subunit protein uL18 (195 aa).

It belongs to the universal ribosomal protein uL18 family. In terms of assembly, part of the 50S ribosomal subunit. Contacts the 5S and 23S rRNAs.

This is one of the proteins that bind and probably mediate the attachment of the 5S RNA into the large ribosomal subunit, where it forms part of the central protuberance. The sequence is that of Large ribosomal subunit protein uL18 from Methanococcus vannielii.